The primary structure comprises 425 residues: [Pyruvate dehydrogenase (acetyl-transferring)] kinase, mitochondrial (425 aa).

Residue His178 is modified to Phosphohistidine; by autocatalysis. The region spanning 180–418 (NVAVEIALDI…DVYIHLNRLC (239 aa)) is the Histidine kinase domain. Residues 296-303 (EILKNSLR), Asp336, 355-356 (TT), and 379-384 (GFGFGL) contribute to the ATP site.

The protein belongs to the PDK/BCKDK protein kinase family.

The protein resides in the mitochondrion matrix. The catalysed reaction is L-seryl-[pyruvate dehydrogenase E1 alpha subunit] + ATP = O-phospho-L-seryl-[pyruvate dehydrogenase E1 alpha subunit] + ADP + H(+). Its function is as follows. Inhibits the mitochondrial pyruvate dehydrogenase complex by phosphorylation of the E1 alpha subunit, thus contributing to the regulation of glucose metabolism. The chain is [Pyruvate dehydrogenase (acetyl-transferring)] kinase, mitochondrial (pkp1) from Schizosaccharomyces pombe (strain 972 / ATCC 24843) (Fission yeast).